Consider the following 728-residue polypeptide: Catalase-peroxidase 1 (728 aa).

Residues 91–218 (WHSAGTYRTA…LAAVQMGLIY (128 aa)) constitute a cross-link (tryptophyl-tyrosyl-methioninium (Trp-Tyr) (with M-244)). The active-site Proton acceptor is the H92. Residues 218–244 (YVNPEGPDGNPDPVAAAHDIRETFARM) constitute a cross-link (tryptophyl-tyrosyl-methioninium (Tyr-Met) (with W-91)). Residue H259 coordinates heme b.

It belongs to the peroxidase family. Peroxidase/catalase subfamily. Homodimer or homotetramer. It depends on heme b as a cofactor. Post-translationally, formation of the three residue Trp-Tyr-Met cross-link is important for the catalase, but not the peroxidase activity of the enzyme.

The enzyme catalyses H2O2 + AH2 = A + 2 H2O. It catalyses the reaction 2 H2O2 = O2 + 2 H2O. Bifunctional enzyme with both catalase and broad-spectrum peroxidase activity. This chain is Catalase-peroxidase 1, found in Burkholderia orbicola (strain MC0-3).